The chain runs to 515 residues: Putative ribose/galactose/methyl galactoside import ATP-binding protein (515 aa).

ABC transporter domains follow at residues 25 to 261 (LEVL…VGRE) and 268 to 515 (LREK…SGLN). Residue 57 to 64 (GENGAGKS) participates in ATP binding.

The protein belongs to the ABC transporter superfamily. Carbohydrate importer 2 (CUT2) (TC 3.A.1.2) family.

Its subcellular location is the cell inner membrane. The catalysed reaction is D-ribose(out) + ATP + H2O = D-ribose(in) + ADP + phosphate + H(+). The enzyme catalyses D-galactose(out) + ATP + H2O = D-galactose(in) + ADP + phosphate + H(+). Its function is as follows. Part of an ABC transporter complex involved in carbohydrate import. Could be involved in ribose, galactose and/or methyl galactoside import. Responsible for energy coupling to the transport system. In Pseudomonas fluorescens (strain ATCC BAA-477 / NRRL B-23932 / Pf-5), this protein is Putative ribose/galactose/methyl galactoside import ATP-binding protein.